The sequence spans 218 residues: MMSERALTAFYGGTFDPIHYGHLRPVIALARLVNLQRVILLPNNVPPHRPQPVASAQQRLAMARLAIAELPDPIFTLDERELQRPTPSYTVDTFEALRREYGPDSPLAFIIGQDSLLTLTQWHRGLELPALCHLLVCARPGYDYGLADERDNRWLARRLTRDPQALHQQPAGLIYCAATQQLAISASDIRARYREGRACDGLLPPSVQGYIDAQGLYR.

Belongs to the NadD family.

It catalyses the reaction nicotinate beta-D-ribonucleotide + ATP + H(+) = deamido-NAD(+) + diphosphate. Its pathway is cofactor biosynthesis; NAD(+) biosynthesis; deamido-NAD(+) from nicotinate D-ribonucleotide: step 1/1. Functionally, catalyzes the reversible adenylation of nicotinate mononucleotide (NaMN) to nicotinic acid adenine dinucleotide (NaAD). This chain is Probable nicotinate-nucleotide adenylyltransferase, found in Sodalis glossinidius (strain morsitans).